The sequence spans 443 residues: uncharacterized protein (443 aa).

10 consecutive transmembrane segments (helical) span residues 7–29, 68–87, 94–111, 121–143, 150–164, 179–201, 206–225, 358–375, 382–399, and 409–431; these read VSLY…MLNT, YISS…SIFT, VLSL…YAIF, VTLF…SMFA, IVII…SLTC, IIST…YIFF, LIIK…FAIS, IRFI…FIRN, LFVV…SFFG, and LFGM…IYKI.

Its subcellular location is the cell membrane. This is an uncharacterized protein from Escherichia coli (strain K12).